The following is a 63-amino-acid chain: Large ribosomal subunit protein bL32 (63 aa).

The segment at 1 to 22 (MANPKAKMSKSRRDKRRAQFNA) is disordered. Over residues 7-18 (KMSKSRRDKRRA) the composition is skewed to basic residues.

This sequence belongs to the bacterial ribosomal protein bL32 family.

In Chlorobium limicola (strain DSM 245 / NBRC 103803 / 6330), this protein is Large ribosomal subunit protein bL32.